Here is a 303-residue protein sequence, read N- to C-terminus: RELT-like protein 2 (303 aa).

A helical membrane pass occupies residues 15 to 35; that stretch reads LYMLFLLVLVFFLMGLVGFMI. 3 disordered regions span residues 47–68, 135–214, and 249–303; these read RTSR…DDVN, CSRS…QPRT, and PCTL…AGGM. Residue S52 is modified to Phosphoserine. Composition is skewed to basic and acidic residues over residues 148–158 and 172–188; these read RSKEGKSRPRP and THIE…DGSP. A compositionally biased stretch (gly residues) spans 194 to 212; sequence GSGGGQEPGGSQAAGGGQP. Over residues 274–295 the composition is skewed to polar residues; it reads GLSSQEANGQPTKLDTSGQQES.

This sequence belongs to the RELT family. Interacts with RELT, RELL1, OXSR1, PLSCR1 and TRAF2.

It localises to the cell membrane. Its function is as follows. Induces activation of MAPK14/p38 cascade, when overexpressed. Induces apoptosis, when overexpressed. The protein is RELT-like protein 2 (Rell2) of Mus musculus (Mouse).